The primary structure comprises 244 residues: INO80 complex subunit E (244 aa).

Residues 10 to 54 (DYKKKYRNLKRKLKFLIYEHECFQEELRKAQRKLLKVSRDKSFLL) adopt a coiled-coil conformation. 2 disordered regions span residues 59–187 (QYEN…PLTF) and 222–244 (FSDA…DIPE). 2 stretches are compositionally biased toward low complexity: residues 99-115 (PPLG…LPPS) and 122-136 (ASRA…LASP). Residues 157–171 (RPKREKRPRLPRKLK) show a composition bias toward basic residues. Glycyl lysine isopeptide (Lys-Gly) (interchain with G-Cter in SUMO2) cross-links involve residues lysine 159 and lysine 171. The segment covering 230–244 (DALDGDDDLVIDIPE) has biased composition (acidic residues).

Component of the chromatin remodeling INO80 complex; specifically part of a complex module associated with the N-terminus of INO80.

It is found in the nucleus. In terms of biological role, putative regulatory component of the chromatin remodeling INO80 complex which is involved in transcriptional regulation, DNA replication and probably DNA repair. This Bos taurus (Bovine) protein is INO80 complex subunit E (INO80E).